Reading from the N-terminus, the 455-residue chain is Probable ATP-dependent RNA helicase DDX47 (455 aa).

The segment at 1–21 (MAADEEPDSPSGALQTAAEEE) is disordered. N-acetylalanine is present on A2. At S9 the chain carries Phosphoserine. Positions 24-52 (KTFKDLGVTDVLCEACDQLGWAKPTKIQI) match the Q motif motif. A Helicase ATP-binding domain is found at 55–226 (IPLALQGRDI…RAALKNPVKC (172 aa)). An ATP-binding site is contributed by 68–75 (AETGSGKT). Position 149 is a phosphothreonine (T149). Positions 174 to 177 (DEAD) match the DEAD box motif. In terms of domain architecture, Helicase C-terminal spans 237–397 (KLQQYYLFIP…VFPTQDEEVM (161 aa)). A disordered region spans residues 412–455 (MELREHGEKKKRKREDAGDDDDKEGAIGVRNKVAGGKMKKRKGR).

The protein belongs to the DEAD box helicase family. DDX47/RRP3 subfamily. As to quaternary structure, interacts with AGO1 and AGO2. Interacts with GABARAP. Interacts with NOL8; the interaction is RNA-dependent.

It is found in the nucleus. The protein resides in the nucleolus. It carries out the reaction ATP + H2O = ADP + phosphate + H(+). Functionally, involved in apoptosis. May have a role in rRNA processing and mRNA splicing. Associates with pre-rRNA precursors. The sequence is that of Probable ATP-dependent RNA helicase DDX47 (Ddx47) from Mus musculus (Mouse).